Consider the following 199-residue polypeptide: Cytochrome c oxidase subunit 2 (199 aa).

A helical transmembrane segment spans residues 1–13 (AICSLVLYLLTLM). The Mitochondrial matrix portion of the chain corresponds to 14–26 (LMEKLSSNTVDAQ). The helical transmembrane segment at 27–54 (EVELIWTILPAIVLILLALPSLQILYMM) threads the bilayer. The Mitochondrial intermembrane portion of the chain corresponds to 55–199 (DEIDEPDLTL…SSLLSISSSL (145 aa)). His128, Cys163, Glu165, Cys167, His171, and Met174 together coordinate Cu cation. Glu165 provides a ligand contact to Mg(2+).

It belongs to the cytochrome c oxidase subunit 2 family. Component of the cytochrome c oxidase (complex IV, CIV), a multisubunit enzyme composed of 14 subunits. The complex is composed of a catalytic core of 3 subunits MT-CO1, MT-CO2 and MT-CO3, encoded in the mitochondrial DNA, and 11 supernumerary subunits COX4I, COX5A, COX5B, COX6A, COX6B, COX6C, COX7A, COX7B, COX7C, COX8 and NDUFA4, which are encoded in the nuclear genome. The complex exists as a monomer or a dimer and forms supercomplexes (SCs) in the inner mitochondrial membrane with NADH-ubiquinone oxidoreductase (complex I, CI) and ubiquinol-cytochrome c oxidoreductase (cytochrome b-c1 complex, complex III, CIII), resulting in different assemblies (supercomplex SCI(1)III(2)IV(1) and megacomplex MCI(2)III(2)IV(2)). Found in a complex with TMEM177, COA6, COX18, COX20, SCO1 and SCO2. Interacts with TMEM177 in a COX20-dependent manner. Interacts with COX20. Interacts with COX16. The cofactor is Cu cation.

It is found in the mitochondrion inner membrane. The catalysed reaction is 4 Fe(II)-[cytochrome c] + O2 + 8 H(+)(in) = 4 Fe(III)-[cytochrome c] + 2 H2O + 4 H(+)(out). Component of the cytochrome c oxidase, the last enzyme in the mitochondrial electron transport chain which drives oxidative phosphorylation. The respiratory chain contains 3 multisubunit complexes succinate dehydrogenase (complex II, CII), ubiquinol-cytochrome c oxidoreductase (cytochrome b-c1 complex, complex III, CIII) and cytochrome c oxidase (complex IV, CIV), that cooperate to transfer electrons derived from NADH and succinate to molecular oxygen, creating an electrochemical gradient over the inner membrane that drives transmembrane transport and the ATP synthase. Cytochrome c oxidase is the component of the respiratory chain that catalyzes the reduction of oxygen to water. Electrons originating from reduced cytochrome c in the intermembrane space (IMS) are transferred via the dinuclear copper A center (CU(A)) of subunit 2 and heme A of subunit 1 to the active site in subunit 1, a binuclear center (BNC) formed by heme A3 and copper B (CU(B)). The BNC reduces molecular oxygen to 2 water molecules using 4 electrons from cytochrome c in the IMS and 4 protons from the mitochondrial matrix. The protein is Cytochrome c oxidase subunit 2 (MT-CO2) of Casuarius bennetti (Dwarf cassowary).